The primary structure comprises 75 residues: Kappa-conotoxin RIIIK (75 aa).

The signal sequence occupies residues 1-19 (MSKLGVLLTICLLLFPLTA). Residues 20–50 (LPMDGDQPVDRLAERMQDNISSEQHTFFEKR) constitute a propeptide that is removed on maturation. 4 positions are modified to 4-hydroxyproline: Pro-52, Pro-63, Pro-65, and Pro-71. Disulfide bonds link Cys-54–Cys-67, Cys-55–Cys-72, and Cys-62–Cys-73. Thr-74 is subject to Threonine amide.

Belongs to the conotoxin M superfamily. Expressed by the venom duct.

It is found in the secreted. Its function is as follows. Kappa-conotoxins inhibits voltage-gated potassium channels (Kv). This synthetic toxin reversibly inhibits the insect potassium channel Shaker K+, the teleost homolog TSha1 and the mammalian Kv1.2/KCNA2 channel. Interacts with the pore region of the insect channel, in a state-dependent manner. Causes seizure when intracerebrovascularly injected into mice. Is also toxic when intrathecally injected into mice, but shows no visible effects by intraperitoneal injection. Shows protective effects on cardiac tissue when administered after an ischemic event. The protein is Kappa-conotoxin RIIIK of Conus radiatus (Rayed cone).